Consider the following 319-residue polypeptide: L-galactose dehydrogenase (319 aa).

Tyr-59 functions as the Proton donor in the catalytic mechanism. The SIS domain occupies His-122–Val-269. Residue His-124 coordinates substrate.

Belongs to the aldo/keto reductase family.

The catalysed reaction is L-galactose + NAD(+) = L-galactono-1,4-lactone + NADH + H(+). Its function is as follows. Catalyzes the oxidation of L-galactose to L-galactono-1,4-lactone in the presence of NAD(+). Uses NAD(+) as a hydrogen acceptor much more efficiently than NADP(+). This is L-galactose dehydrogenase (LGALDH) from Arabidopsis thaliana (Mouse-ear cress).